The sequence spans 250 residues: Dimethyl sulfide dehydrogenase assembly chaperone protein (250 aa).

The tract at residues 231–250 (SAEARSDSAPDAAAHQNLWG) is disordered.

The protein belongs to the type II DMSO reductase enzyme chaperone family.

The protein resides in the cytoplasm. In terms of biological role, may function as a system-specific chaperone protein essential for the assembly of an active dimethyl sulfide dehydrogenase DdhABC. This chain is Dimethyl sulfide dehydrogenase assembly chaperone protein (ddhD), found in Rhodovulum sulfidophilum (Rhodobacter sulfidophilus).